Here is a 381-residue protein sequence, read N- to C-terminus: Sulfate adenylyltransferase (381 aa).

It belongs to the sulfate adenylyltransferase family.

It catalyses the reaction sulfate + ATP + H(+) = adenosine 5'-phosphosulfate + diphosphate. The protein operates within sulfur metabolism; hydrogen sulfide biosynthesis; sulfite from sulfate: step 1/3. This chain is Sulfate adenylyltransferase, found in Carboxydothermus hydrogenoformans (strain ATCC BAA-161 / DSM 6008 / Z-2901).